A 494-amino-acid chain; its full sequence is Endoglucanase 1 (494 aa).

An N-terminal signal peptide occupies residues 1–25 (MDCSSPLSLFHLLLVCTVMVKCCSA). The active-site Nucleophile is Asp82. Residues Asn254 and Asn359 are each glycosylated (N-linked (GlcNAc...) asparagine). Active-site residues include His411, Asp462, and Glu471.

Belongs to the glycosyl hydrolase 9 (cellulase E) family.

The catalysed reaction is Endohydrolysis of (1-&gt;4)-beta-D-glucosidic linkages in cellulose, lichenin and cereal beta-D-glucans.. Involved in ripening fruit process. This chain is Endoglucanase 1 (CEL1), found in Persea americana (Avocado).